Here is a 298-residue protein sequence, read N- to C-terminus: Bifunctional protein FolD (298 aa).

NADP(+) contacts are provided by residues 165–167 (GRS), S190, and I231.

This sequence belongs to the tetrahydrofolate dehydrogenase/cyclohydrolase family. Homodimer.

The catalysed reaction is (6R)-5,10-methylene-5,6,7,8-tetrahydrofolate + NADP(+) = (6R)-5,10-methenyltetrahydrofolate + NADPH. It catalyses the reaction (6R)-5,10-methenyltetrahydrofolate + H2O = (6R)-10-formyltetrahydrofolate + H(+). It functions in the pathway one-carbon metabolism; tetrahydrofolate interconversion. Catalyzes the oxidation of 5,10-methylenetetrahydrofolate to 5,10-methenyltetrahydrofolate and then the hydrolysis of 5,10-methenyltetrahydrofolate to 10-formyltetrahydrofolate. The sequence is that of Bifunctional protein FolD from Prochlorococcus marinus (strain MIT 9301).